The primary structure comprises 286 residues: 3-hydroxyanthranilate 3,4-dioxygenase (286 aa).

The tract at residues 1–160 (MERPVRVKAW…SEQYRTGKPN (160 aa)) is domain A (catalytic). Arg-43 serves as a coordination point for O2. 3 residues coordinate Fe cation: His-47, Glu-53, and His-91. Glu-53 is a substrate binding site. Residues Arg-95 and Glu-105 each contribute to the substrate site. A linker region spans residues 161 to 177 (PDQLLKEPPFPLSTRSV). Residues 178-286 (MEPMCLEAWL…QDPACKKSLG (109 aa)) are domain B.

Belongs to the 3-HAO family. In terms of assembly, monomer. Fe(2+) is required as a cofactor.

Its subcellular location is the cytoplasm. The protein resides in the cytosol. It carries out the reaction 3-hydroxyanthranilate + O2 = (2Z,4Z)-2-amino-3-carboxymuconate 6-semialdehyde. Its pathway is cofactor biosynthesis; NAD(+) biosynthesis; quinolinate from L-kynurenine: step 3/3. Functionally, catalyzes the oxidative ring opening of 3-hydroxyanthranilate to 2-amino-3-carboxymuconate semialdehyde, which spontaneously cyclizes to quinolinate. The polypeptide is 3-hydroxyanthranilate 3,4-dioxygenase (Bos taurus (Bovine)).